The primary structure comprises 388 residues: Translation initiation factor eIF2B subunit beta (388 aa).

The tract at residues 109 to 133 is disordered; that stretch reads DDFETTTSNNNNNNNNNNINSSSNI. The span at 116 to 133 shows a compositional bias: low complexity; that stretch reads SNNNNNNNNNNINSSSNI.

It belongs to the eIF-2B alpha/beta/delta subunits family. In terms of assembly, component of the translation initiation factor 2B (eIF2B) complex which is a heterodecamer of two sets of five different subunits: alpha, beta, gamma, delta and epsilon. Subunits alpha, beta and delta comprise a regulatory subcomplex and subunits epsilon and gamma comprise a catalytic subcomplex. Within the complex, the hexameric regulatory complex resides at the center, with the two heterodimeric catalytic subcomplexes bound on opposite sides.

The protein localises to the cytoplasm. It is found in the cytosol. Its function is as follows. Acts as a component of the translation initiation factor 2B (eIF2B) complex, which catalyzes the exchange of GDP for GTP on eukaryotic initiation factor 2 (eIF2) gamma subunit. Its guanine nucleotide exchange factor activity is repressed when bound to eIF2 complex phosphorylated on the alpha subunit, thereby limiting the amount of methionyl-initiator methionine tRNA available to the ribosome and consequently global translation is repressed. This Dictyostelium discoideum (Social amoeba) protein is Translation initiation factor eIF2B subunit beta (eif2b2).